Here is a 149-residue protein sequence, read N- to C-terminus: Large ribosomal subunit protein uL11 (149 aa).

It belongs to the universal ribosomal protein uL11 family. In terms of assembly, part of the ribosomal stalk of the 50S ribosomal subunit. Interacts with L10 and the large rRNA to form the base of the stalk. L10 forms an elongated spine to which L12 dimers bind in a sequential fashion forming a multimeric L10(L12)X complex. One or more lysine residues are methylated.

Functionally, forms part of the ribosomal stalk which helps the ribosome interact with GTP-bound translation factors. This Methylorubrum extorquens (strain CM4 / NCIMB 13688) (Methylobacterium extorquens) protein is Large ribosomal subunit protein uL11.